Consider the following 142-residue polypeptide: Hemoglobin subunit beta-2 (142 aa).

The Globin domain maps to 2 to 142; sequence SLTDEEKHLI…VTEALSCQYH (141 aa). His-59 and His-88 together coordinate heme b.

Belongs to the globin family. Heterotetramer of two alpha chains and two beta chains. In terms of tissue distribution, red blood cells.

In terms of biological role, involved in oxygen transport from the lung to the various peripheral tissues. In Torpedo marmorata (Marbled electric ray), this protein is Hemoglobin subunit beta-2 (HBB2).